Consider the following 145-residue polypeptide: Flagellar assembly factor FliW (145 aa).

The protein belongs to the FliW family. As to quaternary structure, interacts with translational regulator CsrA and flagellin(s).

Its subcellular location is the cytoplasm. Functionally, acts as an anti-CsrA protein, binds CsrA and prevents it from repressing translation of its target genes, one of which is flagellin. Binds to flagellin and participates in the assembly of the flagellum. This Thermosipho africanus (strain TCF52B) protein is Flagellar assembly factor FliW.